Here is a 103-residue protein sequence, read N- to C-terminus: Large ribosomal subunit protein bL21 (103 aa).

Belongs to the bacterial ribosomal protein bL21 family. As to quaternary structure, part of the 50S ribosomal subunit. Contacts protein L20.

Its function is as follows. This protein binds to 23S rRNA in the presence of protein L20. The polypeptide is Large ribosomal subunit protein bL21 (Chromohalobacter salexigens (strain ATCC BAA-138 / DSM 3043 / CIP 106854 / NCIMB 13768 / 1H11)).